The chain runs to 231 residues: Orotidine 5'-phosphate decarboxylase (231 aa).

Substrate is bound by residues D11, K33, 60–69 (DLKFHDIPNT), T117, R178, Q187, G207, and R208. Catalysis depends on K62, which acts as the Proton donor.

The protein belongs to the OMP decarboxylase family. Type 1 subfamily. As to quaternary structure, homodimer.

The enzyme catalyses orotidine 5'-phosphate + H(+) = UMP + CO2. Its pathway is pyrimidine metabolism; UMP biosynthesis via de novo pathway; UMP from orotate: step 2/2. In terms of biological role, catalyzes the decarboxylation of orotidine 5'-monophosphate (OMP) to uridine 5'-monophosphate (UMP). The chain is Orotidine 5'-phosphate decarboxylase from Nitrosomonas eutropha (strain DSM 101675 / C91 / Nm57).